The sequence spans 417 residues: Acetyltransferase cdmC (417 aa).

An N-linked (GlcNAc...) asparagine glycan is attached at N64. The next 3 helical transmembrane spans lie at 308 to 328 (IPDGYIGPSLFYMSFVGGYLV), 357 to 377 (GIFWVATFLTVTTPWWIYPLL), and 389 to 409 (LVESVGMNNALAMIGVGAFIL).

It belongs to the wax synthase family.

The protein localises to the membrane. It carries out the reaction chrodrimanin A + acetyl-CoA = chrodrimanin B + CoA. It functions in the pathway secondary metabolite biosynthesis; terpenoid biosynthesis. Functionally, acetyltransferase; part of the gene cluster that mediates the biosynthesis of chrodrimanin B, a meroterpenoid that acts as a potent blocker of insect GABA-gated chloride channels. The first step of the pathway is the biosynthesis of 6-hydroxymellein by the polyketide synthase cdmE. The prenyltransferase cdmH acts as a 6-hydroxymellein 5-farnesyltransferase and produces the hydrophobic metabolite verruculide C. The FAD-dependent monooxygenase cdmI further converts verruculide C into verruculide B. The terpene cyclase cdmG then produced the pentacyclic molecule 3-hydroxypentacecilide A, the backbone structure of chrodrimanin B, via folding the farnesyl moiety of the substrate into the chair-boat conformation. The short-chain dehydrogenase/reductase cdmF functions as the 3-OH dehydrogenase that oxidizes the C-3 hydroxyl group of 3-hydroxypentacecilide A and produces chrodrimanin C, the dehydrogenated product of 3-hydroxypentacecilide A. The cytochrome P450 monooxygenase cdmJ then accepts both 3-hydroxypentacecilide A and chrodrimanin C and functions as a C-7-beta-hydroxylase to produce respectively chrodrimanin H and chrodrimanin F. The dioxygenase cdmA accepts chrodrimanin H to afford chrodrimanin E, which is further transformed to chrodrimanin A by the dioxygenase cdmD. CdmA can also accept chrodrimanin C as substrate to convert it into verruculide A, which is further converted into chrodrimanin T by cdmD. The last step of the biosynthesis is proposed to be performed by the acetyltransferase cdmC which acetylates chrodrimanin A to yield chrodrimanin B. The pathway may also lead to the production of additional shunt products, including chrodrimanins T and U. The sequence is that of Acetyltransferase cdmC from Talaromyces verruculosus (Penicillium verruculosum).